Consider the following 99-residue polypeptide: NADH-ubiquinone oxidoreductase chain 4L (99 aa).

3 helical membrane passes run 4 to 24 (MFLM…VFVS), 29 to 49 (LLST…FLFF), and 63 to 83 (FFLT…VSMI).

This sequence belongs to the complex I subunit 4L family.

It localises to the mitochondrion membrane. It carries out the reaction a ubiquinone + NADH + 5 H(+)(in) = a ubiquinol + NAD(+) + 4 H(+)(out). Core subunit of the mitochondrial membrane respiratory chain NADH dehydrogenase (Complex I) that is believed to belong to the minimal assembly required for catalysis. Complex I functions in the transfer of electrons from NADH to the respiratory chain. The immediate electron acceptor for the enzyme is believed to be ubiquinone. The polypeptide is NADH-ubiquinone oxidoreductase chain 4L (mt:ND4L) (Anopheles gambiae (African malaria mosquito)).